The primary structure comprises 441 residues: Lysine histidine transporter-like 2 (441 aa).

Over 1-32 (MEKSQSSPTKDASTKQKNVDDWLPITSSRNAK) the chain is Cytoplasmic. A helical transmembrane segment spans residues 33–53 (WWYSAFHNVTAMVGAGVLSLP). Residues 54–58 (YAMSN) lie on the Extracellular side of the membrane. A helical membrane pass occupies residues 59 to 79 (LGWGPGVTIMIMSWLITFYTL). Residues 80 to 110 (WQMVQMHEMVPGKRFDRYHELGQHAFGEKLG) are Cytoplasmic-facing. Residues 111–131 (LWIVVPQQLIVEVGVDIVYMV) traverse the membrane as a helical segment. Topologically, residues 132–155 (TGGKSLKKIHDLLCTDCKNIRTTY) are extracellular. The next 2 helical transmembrane spans lie at 156-176 (WIMI…FNSI) and 177-197 (SIVS…AWAT). Topologically, residues 198-222 (SVKKGVHPNVDYSSRASTTSGNVFN) are extracellular. Residues 223-243 (FLNALGDVAFAYAGHNVVLEI) form a helical membrane-spanning segment. Residues 244–264 (QATIPSTPEKPSKIAMWKGVV) lie on the Cytoplasmic side of the membrane. Residues 265 to 285 (VAYIVVAICYFPVAFVCYYIF) traverse the membrane as a helical segment. Residues 286-300 (GNSVDDNILMTLEKP) lie on the Extracellular side of the membrane. A helical membrane pass occupies residues 301–321 (IWLIAIANAFVVVHVIGSYQI). Topologically, residues 322-347 (YAMPVFDMLETFLVKKMMFAPSFKLR) are cytoplasmic. A helical transmembrane segment spans residues 348–370 (FITRTLYVAFTMFVAICIPFFGG). The Extracellular segment spans residues 371 to 373 (LLG). A helical transmembrane segment spans residues 374–396 (FFGGFAFAPTTYYLPCIMWLCIK). Residues 397 to 406 (KPKKYGLSWC) are Cytoplasmic-facing. A helical membrane pass occupies residues 407 to 427 (INWFCIVVGVILTILAPIGGL). Topologically, residues 428-441 (RTIIISAKNYEFFS) are extracellular.

Belongs to the amino acid/polyamine transporter 2 family. Amino acid/auxin permease (AAAP) (TC 2.A.18.2) subfamily.

The protein resides in the cell membrane. Amino acid transporter. The polypeptide is Lysine histidine transporter-like 2 (Arabidopsis thaliana (Mouse-ear cress)).